A 648-amino-acid chain; its full sequence is Chaperone protein DnaK (648 aa).

Threonine 200 carries the post-translational modification Phosphothreonine; by autocatalysis. A disordered region spans residues 612–631 (QAGAAGAAGAAEGAAQGGAQ).

This sequence belongs to the heat shock protein 70 family.

Its function is as follows. Acts as a chaperone. In Burkholderia multivorans (strain ATCC 17616 / 249), this protein is Chaperone protein DnaK.